A 312-amino-acid polypeptide reads, in one-letter code: Large ribosomal subunit protein uL15m (312 aa).

A disordered region spans residues 63–89 (RIRKGRGPSSGYGKTAGRGTKGQKAHG). Gly residues predominate over residues 70-82 (PSSGYGKTAGRGT).

It belongs to the universal ribosomal protein uL15 family. Component of the mitochondrial large ribosomal subunit (mt-LSU). Mature N.crassa 74S mitochondrial ribosomes consist of a small (37S) and a large (54S) subunit. The 37S small subunit contains a 16S ribosomal RNA (16S mt-rRNA) and 32 different proteins. The 54S large subunit contains a 23S rRNA (23S mt-rRNA) and 42 different proteins.

It is found in the mitochondrion. Its function is as follows. Component of the mitochondrial ribosome (mitoribosome), a dedicated translation machinery responsible for the synthesis of mitochondrial genome-encoded proteins, including at least some of the essential transmembrane subunits of the mitochondrial respiratory chain. The mitoribosomes are attached to the mitochondrial inner membrane and translation products are cotranslationally integrated into the membrane. The protein is Large ribosomal subunit protein uL15m (mrpl10) of Neurospora crassa (strain ATCC 24698 / 74-OR23-1A / CBS 708.71 / DSM 1257 / FGSC 987).